A 233-amino-acid polypeptide reads, in one-letter code: Biosynthetic peptidoglycan transglycosylase (233 aa).

The chain crosses the membrane as a helical span at residues 17 to 37 (IVLAVLALVVLPYVLIFFYLL).

This sequence belongs to the glycosyltransferase 51 family.

Its subcellular location is the cell inner membrane. The catalysed reaction is [GlcNAc-(1-&gt;4)-Mur2Ac(oyl-L-Ala-gamma-D-Glu-L-Lys-D-Ala-D-Ala)](n)-di-trans,octa-cis-undecaprenyl diphosphate + beta-D-GlcNAc-(1-&gt;4)-Mur2Ac(oyl-L-Ala-gamma-D-Glu-L-Lys-D-Ala-D-Ala)-di-trans,octa-cis-undecaprenyl diphosphate = [GlcNAc-(1-&gt;4)-Mur2Ac(oyl-L-Ala-gamma-D-Glu-L-Lys-D-Ala-D-Ala)](n+1)-di-trans,octa-cis-undecaprenyl diphosphate + di-trans,octa-cis-undecaprenyl diphosphate + H(+). It functions in the pathway cell wall biogenesis; peptidoglycan biosynthesis. Peptidoglycan polymerase that catalyzes glycan chain elongation from lipid-linked precursors. The polypeptide is Biosynthetic peptidoglycan transglycosylase (Rhizobium etli (strain ATCC 51251 / DSM 11541 / JCM 21823 / NBRC 15573 / CFN 42)).